The sequence spans 470 residues: Dendritic cell-specific transmembrane protein (470 aa).

Residues 1–33 (MRLWTLGTSIFLRLWGTYVFPRSPSWLDFIQHL) are Cytoplasmic-facing. A helical transmembrane segment spans residues 34-54 (GVCCFVAFLSVSLFSAAFYWI). Residue Leu-55 is a topological domain, extracellular. A helical membrane pass occupies residues 56 to 76 (PPVALLSSVWMITCVFLCCSK). The Cytoplasmic segment spans residues 77–97 (RARCFILLAVLSCGLREGRNA). A helical transmembrane segment spans residues 98–118 (LIAAGTGVVIFGHVENIFYNF). Residues 119 to 209 (RGLLDSMTCN…MVVTTELLTS (91 aa)) are Extracellular-facing. Residues 210 to 230 (VGQKLLALAGLLLILVSTGLF) traverse the membrane as a helical segment. Residues 231 to 292 (LKRFLGPCGW…LQLTPKEKKT (62 aa)) lie on the Cytoplasmic side of the membrane. The chain crosses the membrane as a helical span at residues 293–313 (LGLFFLPVLTYLYMWVLFAAV). The Extracellular portion of the chain corresponds to 314–376 (DYLLYRLISS…PKPRLSVSET (63 aa)). A helical transmembrane segment spans residues 377–397 (WVPLSIILLTLIILGLLSSML). At 398–470 (MQLKILVSVS…QTIPANEDDL (73 aa)) the chain is on the cytoplasmic side.

Interacts with CREB3. Monomer. Homodimer. Isoform 1 interacts (via the C-terminus cytoplasmic tail) with OS9 isoform 1 (via the C-terminus tail); the interaction induces DCSTAMP redistribution to the endoplasmic reticulum-Golgi intermediate compartment. Isoform 1 interacts (via the C-terminus cytoplasmic tail) with OS9 isoform 2 (via the C-terminus tail). In terms of processing, glycosylated. As to expression, expressed in macrophages and bone marrow dendritic cells (BM-DC). Weakly expressed in the spleen and lymph node. Highly expressed in multi-nuclear osteoclasts compared to mono-nuclear macrophages. Expressed in foreign body giant cells (FBGCs). Isoform 1 and isoform 2 are expressed in osteoclasts.

Its subcellular location is the cell membrane. The protein localises to the endoplasmic reticulum membrane. It localises to the endoplasmic reticulum-Golgi intermediate compartment membrane. The protein resides in the endosome. In terms of biological role, probable cell surface receptor that plays several roles in cellular fusion, cell differentiation, bone and immune homeostasis. Plays a role in TNFSF11-mediated osteoclastogenesis. Cooperates with OCSTAMP in modulating cell-cell fusion in both osteoclasts and foreign body giant cells (FBGCs). Participates in osteoclast bone resorption. Involved in inducing the expression of tartrate-resistant acid phosphatase in osteoclast precursors. Plays a role in haematopoietic stem cell differentiation of bone marrow cells toward the myeloid lineage. Inhibits the development of neutrophilic granulocytes. Plays also a role in the regulation of dendritic cell (DC) antigen presentation activity by controlling phagocytic activity. Involved in the maintenance of immune self-tolerance and avoidance of autoimmune reactions. The protein is Dendritic cell-specific transmembrane protein (Dcstamp) of Mus musculus (Mouse).